Consider the following 252-residue polypeptide: Carbohydrate deacetylase (252 aa).

2 residues coordinate Mg(2+): His-59 and His-122.

This sequence belongs to the YdjC deacetylase family. Homodimer. Mg(2+) serves as cofactor.

Its function is as follows. Probably catalyzes the deacetylation of acetylated carbohydrates an important step in the degradation of oligosaccharides. The chain is Carbohydrate deacetylase from Vibrio vulnificus (strain CMCP6).